The following is a 145-amino-acid chain: Ribonuclease P protein component (145 aa).

The interval 121–145 (PAAAGTMPPARTVHPSSLSPTEPEL) is disordered. A compositionally biased stretch (polar residues) spans 134-145 (HPSSLSPTEPEL).

Belongs to the RnpA family. As to quaternary structure, consists of a catalytic RNA component (M1 or rnpB) and a protein subunit.

The catalysed reaction is Endonucleolytic cleavage of RNA, removing 5'-extranucleotides from tRNA precursor.. In terms of biological role, RNaseP catalyzes the removal of the 5'-leader sequence from pre-tRNA to produce the mature 5'-terminus. It can also cleave other RNA substrates such as 4.5S RNA. The protein component plays an auxiliary but essential role in vivo by binding to the 5'-leader sequence and broadening the substrate specificity of the ribozyme. This chain is Ribonuclease P protein component, found in Xanthomonas axonopodis pv. citri (strain 306).